Consider the following 452-residue polypeptide: Tubulin beta-2 chain (452 aa).

Gln-11, Glu-74, Ser-143, Val-147, Thr-148, Gly-149, Asn-209, and Asn-231 together coordinate GTP. Glu-74 serves as a coordination point for Mg(2+). A disordered region spans residues 431 to 452; the sequence is QEATADDEAEFEEEGEVEGEYD. Over residues 434-452 the composition is skewed to acidic residues; sequence TADDEAEFEEEGEVEGEYD.

Belongs to the tubulin family. Dimer of alpha and beta chains. A typical microtubule is a hollow water-filled tube with an outer diameter of 25 nm and an inner diameter of 15 nM. Alpha-beta heterodimers associate head-to-tail to form protofilaments running lengthwise along the microtubule wall with the beta-tubulin subunit facing the microtubule plus end conferring a structural polarity. Microtubules usually have 13 protofilaments but different protofilament numbers can be found in some organisms and specialized cells. Mg(2+) is required as a cofactor.

It is found in the cytoplasm. Its subcellular location is the cytoskeleton. Tubulin is the major constituent of microtubules, a cylinder consisting of laterally associated linear protofilaments composed of alpha- and beta-tubulin heterodimers. Microtubules grow by the addition of GTP-tubulin dimers to the microtubule end, where a stabilizing cap forms. Below the cap, tubulin dimers are in GDP-bound state, owing to GTPase activity of alpha-tubulin. The protein is Tubulin beta-2 chain of Homarus americanus (American lobster).